The primary structure comprises 143 residues: MLVPKRVKYRRVHRGHMRGEAKGGRTVAFGDYGLQSLENNWITNRQIEAARIAITRYMKRGGKVWIKIFPQKSYTSKGVGVRMGNGKGAPEGWVAPTKRGTIMFEVGGVSEAVAKEALRLAMHKLPVKAKIVSKAEASKEVNA.

This sequence belongs to the universal ribosomal protein uL16 family. Part of the 50S ribosomal subunit.

In terms of biological role, binds 23S rRNA and is also seen to make contacts with the A and possibly P site tRNAs. This is Large ribosomal subunit protein uL16 from Oenococcus oeni (strain ATCC BAA-331 / PSU-1).